A 159-amino-acid polypeptide reads, in one-letter code: Serine-protein kinase RsbW (159 aa).

Belongs to the anti-sigma-factor family.

It carries out the reaction L-seryl-[protein] + ATP = O-phospho-L-seryl-[protein] + ADP + H(+). It catalyses the reaction L-threonyl-[protein] + ATP = O-phospho-L-threonyl-[protein] + ADP + H(+). Its function is as follows. Negative regulator of sigma-B activity. Phosphorylates and inactivates its specific antagonist protein, RsbV. Upon phosphorylation of RsbV, RsbW is released and binds to sigma-B, thereby blocking its ability to form an RNA polymerase holoenzyme (E-sigma-B). The chain is Serine-protein kinase RsbW from Staphylococcus aureus (strain MSSA476).